Here is a 353-residue protein sequence, read N- to C-terminus: sn-glycerol-3-phosphate import ATP-binding protein UgpC (353 aa).

The ABC transporter domain occupies 4–234; the sequence is ILLNDVRKSY…PASEFVAGFI (231 aa). 36 to 43 is an ATP binding site; the sequence is GPSGCGKS.

This sequence belongs to the ABC transporter superfamily. sn-glycerol-3-phosphate importer (TC 3.A.1.1.3) family. In terms of assembly, the complex is composed of two ATP-binding proteins (UgpC), two transmembrane proteins (UgpA and UgpE) and a solute-binding protein (UgpB).

It localises to the cell inner membrane. The catalysed reaction is sn-glycerol 3-phosphate(out) + ATP + H2O = sn-glycerol 3-phosphate(in) + ADP + phosphate + H(+). Part of the ABC transporter complex UgpBAEC involved in sn-glycerol-3-phosphate (G3P) import. Responsible for energy coupling to the transport system. This chain is sn-glycerol-3-phosphate import ATP-binding protein UgpC, found in Paracoccus denitrificans (strain Pd 1222).